A 142-amino-acid chain; its full sequence is Putative transcriptional regulatory protein PF0535 (142 aa).

This sequence belongs to the Tfx family.

Putative transcriptional regulator. The chain is Putative transcriptional regulatory protein PF0535 from Pyrococcus furiosus (strain ATCC 43587 / DSM 3638 / JCM 8422 / Vc1).